The primary structure comprises 89 residues: Small ribosomal subunit protein uS15 (89 aa).

This sequence belongs to the universal ribosomal protein uS15 family. In terms of assembly, part of the 30S ribosomal subunit. Forms a bridge to the 50S subunit in the 70S ribosome, contacting the 23S rRNA.

In terms of biological role, one of the primary rRNA binding proteins, it binds directly to 16S rRNA where it helps nucleate assembly of the platform of the 30S subunit by binding and bridging several RNA helices of the 16S rRNA. Its function is as follows. Forms an intersubunit bridge (bridge B4) with the 23S rRNA of the 50S subunit in the ribosome. The protein is Small ribosomal subunit protein uS15 of Lactococcus lactis subsp. lactis (strain IL1403) (Streptococcus lactis).